Consider the following 304-residue polypeptide: MPLFDLISPKAFVKLVASEKVHRIVPVDATWYLPSWKLDNKVDFLTKPRIPNSIFFDIDAISDKKSPYPHMFPTKKVFDDAMSNLGVQKDDILVVYDRVGNFSSPRCAWTLGVMGHPKVYLLNNFNQYREFKYPLDSSKVAAFSPYPKSHYESSESFQDKEIVDYEEMFQLVKSGELAKKFNAFDARSLGRFEGTEPEPRSDIPSGHIPGTQPLPYGSLLDPETKTYPEAGEAIHATLEKALKDFHCTLDPSKPTICSCGTGVSGVIIKTALELAGVPNVRLYDGSWTEWVLKSGPEWIAENRD.

2 Rhodanese domains span residues 20 to 137 and 177 to 299; these read KVHR…PLDS and LAKK…PEWI. Basic and acidic residues predominate over residues 191–201; it reads RFEGTEPEPRS. A disordered region spans residues 191–222; sequence RFEGTEPEPRSDIPSGHIPGTQPLPYGSLLDP. Ser-201 bears the Phosphoserine mark. Catalysis depends on Cys-259, which acts as the Cysteine persulfide intermediate. Phosphoserine is present on Ser-264.

It localises to the mitochondrion. The protein resides in the cytoplasm. The catalysed reaction is thiosulfate + hydrogen cyanide = thiocyanate + sulfite + 2 H(+). In terms of biological role, sulfur transferase that accepts persulfite from NFS1 and transfers it to UBA4 in the pathway for 2-thiolation of the wobble uridine base of tRNAs. Stimulates sulfur transfer by NFS1. Involved in metabolism of sterol esters in a tRNA thiolation pathway-independent manner. The polypeptide is Thiosulfate sulfurtransferase TUM1 (Saccharomyces cerevisiae (strain ATCC 204508 / S288c) (Baker's yeast)).